A 458-amino-acid chain; its full sequence is Argininosuccinate lyase (458 aa).

The protein belongs to the lyase 1 family. Argininosuccinate lyase subfamily.

It localises to the cytoplasm. The catalysed reaction is 2-(N(omega)-L-arginino)succinate = fumarate + L-arginine. It functions in the pathway amino-acid biosynthesis; L-arginine biosynthesis; L-arginine from L-ornithine and carbamoyl phosphate: step 3/3. The polypeptide is Argininosuccinate lyase (Pelobacter propionicus (strain DSM 2379 / NBRC 103807 / OttBd1)).